Reading from the N-terminus, the 461-residue chain is Squalene synthase BSS (461 aa).

Residues R51 and R76 each contribute to the NADP(+) site. Residues D79, E82, and D83 each contribute to the Mg(2+) site. NADP(+) is bound by residues R219, K322, and R324. A helical transmembrane segment spans residues 430–450 (VTQHWWSILIFLISIAVFFIP).

This sequence belongs to the phytoene/squalene synthase family. It depends on Mg(2+) as a cofactor.

The protein resides in the endoplasmic reticulum membrane. The enzyme catalyses 2 (2E,6E)-farnesyl diphosphate + NADPH + H(+) = squalene + 2 diphosphate + NADP(+). It carries out the reaction 2 (2E,6E)-farnesyl diphosphate + NADH + H(+) = squalene + 2 diphosphate + NAD(+). Converts farnesyl diphosphate (FPP) into squalene, a precursor for sterol biosynthesis in eukaryotes. Does not possess botryococcene synthase activity. In Botryococcus braunii (Green alga), this protein is Squalene synthase BSS.